The primary structure comprises 1132 residues: BTB/POZ domain-containing protein 7 (1132 aa).

Positions 1–10 (MGANASNYPH) are enriched in polar residues. Residues 1–24 (MGANASNYPHSCSPRVGGNSQAQQ) form a disordered region. The N-myristoyl glycine moiety is linked to residue Gly2. 2 consecutive BTB domains span residues 142–211 (TDVD…GMED) and 247–341 (YDVV…DLSV). In terms of domain architecture, BACK spans 413-479 (YGSKWVHRQA…WGEHQLMKRI (67 aa)). Ser722 carries the post-translational modification Phosphoserine. Disordered regions lie at residues 897–1019 (LSQS…HLHR) and 1035–1132 (QRSD…KSAL). A compositionally biased stretch (basic residues) spans 918-927 (RHTHTSRKKH). 4 stretches are compositionally biased toward basic and acidic residues: residues 928–939 (TLEQKTDTRENP), 1000–1019 (KKQEEARREYPLSPDGHLHR), 1083–1093 (PEERSGRRLAD), and 1105–1114 (TDLEREDSIS). At Ser1012 the chain carries Phosphoserine.

The protein localises to the nucleus. Functionally, acts as a mediator of epithelial dynamics and organ branching by promoting cleft progression. Induced following accumulation of fibronectin in forming clefts, leading to local expression of the cell-scattering SNAIL2 and suppression of E-cadherin levels, thereby altering cell morphology and reducing cell-cell adhesion. This stimulates cell separation at the base of forming clefts by local, dynamic intercellular gap formation and promotes cleft progression. The protein is BTB/POZ domain-containing protein 7 (BTBD7) of Homo sapiens (Human).